The sequence spans 840 residues: Protein translocase subunit SecA (840 aa).

ATP is bound by residues Q87, 105 to 109, and D494; that span reads GEGKT. The segment at 791-840 is disordered; it reads LRKEQEDQPMFFGPAEGAGQKPQTRKDRKVGRNDPCPCGSGKKYKKCCGK. Residues C826, C828, C837, and C838 each coordinate Zn(2+).

The protein belongs to the SecA family. Monomer and homodimer. Part of the essential Sec protein translocation apparatus which comprises SecA, SecYEG and auxiliary proteins SecDF-YajC and YidC. Zn(2+) is required as a cofactor.

The protein resides in the cell inner membrane. The protein localises to the cytoplasm. The catalysed reaction is ATP + H2O + cellular proteinSide 1 = ADP + phosphate + cellular proteinSide 2.. Functionally, part of the Sec protein translocase complex. Interacts with the SecYEG preprotein conducting channel. Has a central role in coupling the hydrolysis of ATP to the transfer of proteins into and across the cell membrane, serving as an ATP-driven molecular motor driving the stepwise translocation of polypeptide chains across the membrane. The sequence is that of Protein translocase subunit SecA from Syntrophobacter fumaroxidans (strain DSM 10017 / MPOB).